Here is a 638-residue protein sequence, read N- to C-terminus: MESERDMYRQFQDWCLRTYGDSGKTKTVTRKKYERIVQLLNGSESSSTDNAKFKFWVKSKGFQLGQPDEVRGGGGGAKQVLYVPVKTTDGVGVDEKLSLRRVAVVEDFFDIIYSMHVETGPNGEQIRKHAGQKRTYKAISESYAFLPREAVTRFLMSCSECQKRMHLNPDGTDHKDNGKPPTLVTSMIDYNMPITMAYMKHMKLQLLNSQQDEDESSIESDEFDMSDSTRMSAVNSDLSSNLEERMQSPQNLHGQQDDDSAAESFNGNETLGHSSIASGGTHSREMGDSNSDGKTGLEQDEQPLNLSDSPLSAQLTSEYRIDDHNSNGKNKYKNLLISDLKMEREARENGSKSPAHSYSSYDSGKNESVDRGAEDLSLNRGDEDEDDHEDHDDSEKVNETDGVEAERLKAFNMFVRLFVDENLDRMVPISKQPKEKIQAIIDSCRRQFPEYQERARKRIRTYLKSCRRMKRSGFEMSRPIPSHLTSAVAESILASACESESRNAAKRMRLERQQDESAPADKQCKPEATQATYSTSAVPGSQDVLYINGNGTYSYHSYRGLGGGLLNLNDASSSGPTDLSMKRQLATSSGSSSSSNSRPQLSPTEINAVRQLVAGYRESAAFLLRSADELENLILQQN.

Disordered stretches follow at residues 210 to 312, 343 to 403, 503 to 535, and 573 to 603; these read QQDE…SPLS, EREA…TDGV, NAAK…TYST, and SSGP…QLSP. Residues 211-225 are compositionally biased toward acidic residues; it reads QDEDESSIESDEFDM. Polar residues-rich tracts occupy residues 229 to 254, 263 to 281, 302 to 312, and 351 to 363; these read TRMS…NLHG, ESFN…SGGT, QPLNLSDSPLS, and SKSP…SYDS. Basic and acidic residues-rich tracts occupy residues 364–374, 391–403, and 503–515; these read GKNESVDRGAE, HDDS…TDGV, and NAAK…RQQD. Residues 588 to 597 show a composition bias toward low complexity; it reads SSGSSSSSNS.

As to expression, expressed predominantly in fetal brain, adult brain and testis.

The protein resides in the nucleus. It is found in the nucleolus. This Homo sapiens (Human) protein is Nucleolar protein 4 (NOL4).